The sequence spans 263 residues: Trans-2-decenoyl-[acyl-carrier-protein] isomerase (263 aa).

The protein belongs to the enoyl-CoA hydratase/isomerase family. In terms of assembly, homotetramer.

The enzyme catalyses (2E)-decenoyl-[ACP] = (3Z)-decenoyl-[ACP]. It functions in the pathway lipid metabolism; fatty acid biosynthesis. Functionally, catalyzes the isomerization of trans-2-decenoyl-ACP to cis-3-decenoyl-ACP. Required for survival at low pH. In Streptococcus mutans serotype c (strain ATCC 700610 / UA159), this protein is Trans-2-decenoyl-[acyl-carrier-protein] isomerase (fabM).